The chain runs to 370 residues: Chorismate synthase (370 aa).

Residue R47 coordinates NADP(+). FMN contacts are provided by residues 124–126 (RSS), G286, 301–305 (KPTAT), and R327.

This sequence belongs to the chorismate synthase family. Homotetramer. FMNH2 serves as cofactor.

It carries out the reaction 5-O-(1-carboxyvinyl)-3-phosphoshikimate = chorismate + phosphate. It functions in the pathway metabolic intermediate biosynthesis; chorismate biosynthesis; chorismate from D-erythrose 4-phosphate and phosphoenolpyruvate: step 7/7. In terms of biological role, catalyzes the anti-1,4-elimination of the C-3 phosphate and the C-6 proR hydrogen from 5-enolpyruvylshikimate-3-phosphate (EPSP) to yield chorismate, which is the branch point compound that serves as the starting substrate for the three terminal pathways of aromatic amino acid biosynthesis. This reaction introduces a second double bond into the aromatic ring system. This chain is Chorismate synthase, found in Trichodesmium erythraeum (strain IMS101).